Consider the following 134-residue polypeptide: Small ribosomal subunit protein uS11 (134 aa).

This sequence belongs to the universal ribosomal protein uS11 family. As to quaternary structure, part of the 30S ribosomal subunit. Interacts with proteins S7 and S18. Binds to IF-3.

Functionally, located on the platform of the 30S subunit, it bridges several disparate RNA helices of the 16S rRNA. Forms part of the Shine-Dalgarno cleft in the 70S ribosome. This is Small ribosomal subunit protein uS11 from Herminiimonas arsenicoxydans.